The primary structure comprises 1499 residues: DNA-directed RNA polymerase subunit beta' (1499 aa).

Zn(2+) contacts are provided by C67, C69, C82, and C85. Mg(2+)-binding residues include D497, D499, and D501. Zn(2+) is bound by residues C865, C940, C947, and C950. The tract at residues 1475-1499 is disordered; it reads YEPSQRAYQEDEYAKKEDGEIAIDD. Positions 1482–1493 are enriched in basic and acidic residues; sequence YQEDEYAKKEDG.

Belongs to the RNA polymerase beta' chain family. As to quaternary structure, the RNAP catalytic core consists of 2 alpha, 1 beta, 1 beta' and 1 omega subunit. When a sigma factor is associated with the core the holoenzyme is formed, which can initiate transcription. Requires Mg(2+) as cofactor. It depends on Zn(2+) as a cofactor.

It carries out the reaction RNA(n) + a ribonucleoside 5'-triphosphate = RNA(n+1) + diphosphate. Its function is as follows. DNA-dependent RNA polymerase catalyzes the transcription of DNA into RNA using the four ribonucleoside triphosphates as substrates. This is DNA-directed RNA polymerase subunit beta' from Chloroherpeton thalassium (strain ATCC 35110 / GB-78).